A 406-amino-acid chain; its full sequence is E3 ubiquitin-protein ligase RING1 (406 aa).

The residue at position 24 (Thr-24) is a Phosphothreonine. A necessary for transcriptional repression region spans residues 30 to 234 (MDGTEIAVSP…GGAGSEDSGD (205 aa)). Position 38 is a phosphoserine (Ser-38). The RING-type zinc-finger motif lies at 48 to 88 (CPICLDMLKNTMTTKECLHRFCSDCIVTALRSGNKECPTCR). Phosphoserine occurs at positions 140, 187, and 190. 2 disordered regions span residues 151–263 (HRAQ…GEIE) and 309–354 (QQQE…PSLE). A compositionally biased stretch (acidic residues) spans 175–187 (EPGEGEGDGEDIS). Positions 201-204 (KRPR) match the Nuclear localization signal motif. Over residues 205-228 (GGGAGGSSVGTGGGAAGGACGGAG) the composition is skewed to gly residues. Thr-215 carries the phosphothreonine modification. Phosphoserine occurs at positions 229 and 232. A necessary for interaction with CBX2 region spans residues 230-406 (EDSGDRGGTL…LCYAPTKDPK (177 aa)). Residues 235–244 (RGGTLGGGTL) are compositionally biased toward gly residues. Residues 246-258 (PPSPPGAPSPPEP) are compositionally biased toward pro residues. Ser-248 and Ser-254 each carry phosphoserine. Gly residues predominate over residues 317 to 343 (GGPGGGASDTGGPDGGGGERGVSGGGE).

Component of chromatin-associated Polycomb (PcG) complexes. Part of the E2F6.com-1 complex in G0 phase composed of E2F6, MGA, MAX, TFDP1, CBX3, BAT8, EUHMTASE1, RING1, RNF2/RING2 MBLR, L3MBTL2 and YAF2. Interacts with CBX2 and PCGF6. Component of a PRC1-like complex. Component of repressive BCOR complex containing Polycomb group subcomplex at least composed of RYBP, PCGF1, BCOR and RNF2/RING2. Interacts with BMI1, PHC2, PCGF2, RNF2; CBX6, CBX7 and CBX8. Interacts with MN1. Interacts with USP26.

The protein resides in the nucleus speckle. The enzyme catalyses S-ubiquitinyl-[E2 ubiquitin-conjugating enzyme]-L-cysteine + [acceptor protein]-L-lysine = [E2 ubiquitin-conjugating enzyme]-L-cysteine + N(6)-ubiquitinyl-[acceptor protein]-L-lysine.. It functions in the pathway protein modification; protein ubiquitination. Its function is as follows. Constitutes one of the E3 ubiquitin-protein ligases that mediate monoubiquitination of 'Lys-119' of histone H2A, thereby playing a central role in histone code and gene regulation. H2A 'Lys-119' ubiquitination gives a specific tag for epigenetic transcriptional repression and participates in X chromosome inactivation of female mammals. Essential component of a Polycomb group (PcG) multiprotein PRC1-like complex, a complex class required to maintain the transcriptionally repressive state of many genes, including Hox genes, throughout development. PcG PRC1 complex acts via chromatin remodeling and modification of histones, rendering chromatin heritably changed in its expressibility. Compared to RNF2/RING2, it does not have the main E3 ubiquitin ligase activity on histone H2A, and it may rather act as a modulator of RNF2/RING2 activity. The polypeptide is E3 ubiquitin-protein ligase RING1 (Rattus norvegicus (Rat)).